The following is a 150-amino-acid chain: Small ribosomal subunit protein uS13 (150 aa).

Positions 131-150 (QRTKSTFRRGPTVGVSRRKK) are disordered.

Belongs to the universal ribosomal protein uS13 family. As to quaternary structure, part of the 30S ribosomal subunit. Forms a loose heterodimer with protein S19. Forms two bridges to the 50S subunit in the 70S ribosome.

Functionally, located at the top of the head of the 30S subunit, it contacts several helices of the 16S rRNA. In the 70S ribosome it contacts the 23S rRNA (bridge B1a) and protein L5 of the 50S subunit (bridge B1b), connecting the 2 subunits; these bridges are implicated in subunit movement. This is Small ribosomal subunit protein uS13 from Methanocaldococcus jannaschii (strain ATCC 43067 / DSM 2661 / JAL-1 / JCM 10045 / NBRC 100440) (Methanococcus jannaschii).